A 130-amino-acid polypeptide reads, in one-letter code: Small ribosomal subunit protein uS9 (130 aa).

It belongs to the universal ribosomal protein uS9 family.

This is Small ribosomal subunit protein uS9 from Leptothrix cholodnii (strain ATCC 51168 / LMG 8142 / SP-6) (Leptothrix discophora (strain SP-6)).